We begin with the raw amino-acid sequence, 156 residues long: Snaclec trimecetin subunit alpha (156 aa).

A signal peptide spans 1 to 23 (MGRFIFVSFGLLVVFLSLSGTGA). 3 disulfides stabilise this stretch: Cys-25-Cys-36, Cys-53-Cys-150, and Cys-125-Cys-142. The C-type lectin domain maps to 32 to 151 (FRRYCYKPFK…CGERNLFMCK (120 aa)).

The protein belongs to the snaclec family. Heterodimer of subunits alpha and beta; disulfide-linked. In terms of tissue distribution, expressed by the venom gland.

It is found in the secreted. Snaclec that induces platelet aggregation in either human platelet rich plasma (PRP) or washed platelet suspensions. It causes aggregation in a dose-dependent manner even in the absence of various platelet agonists such as ADP or von Willebrand factor (vWF). Interestingly, it does not induce aggregation in rabbit PRP. A monoclonal antibody against the platelet GPIb receptor blocks the aggregation induced by trimecetin, suggesting that it acts by binding to GPIb (GP1BA/GP1BB). This is Snaclec trimecetin subunit alpha from Protobothrops mucrosquamatus (Taiwan habu).